A 386-amino-acid polypeptide reads, in one-letter code: Protein-glutamate methylesterase/protein-glutamine glutaminase 3 (386 aa).

The 118-residue stretch at 4-121 (KVLVVDDSGF…SRNPQKVKQL (118 aa)) folds into the Response regulatory domain. Aspartate 55 carries the 4-aspartylphosphate modification. Positions 132 to 194 (SNRRSSGFGS…SHAPAHPTTS (63 aa)) are enriched in low complexity. The disordered stretch occupies residues 132–197 (SNRRSSGFGS…PAHPTTSGTA (66 aa)). The CheB-type methylesterase domain maps to 191–383 (PTTSGTAKRK…LDDIGRHLVE (193 aa)). Catalysis depends on residues serine 210, histidine 237, and aspartate 330.

The protein belongs to the CheB family. In terms of processing, phosphorylated by CheA. Phosphorylation of the N-terminal regulatory domain activates the methylesterase activity.

It is found in the cytoplasm. It catalyses the reaction [protein]-L-glutamate 5-O-methyl ester + H2O = L-glutamyl-[protein] + methanol + H(+). The enzyme catalyses L-glutaminyl-[protein] + H2O = L-glutamyl-[protein] + NH4(+). Its function is as follows. Involved in chemotaxis. Part of a chemotaxis signal transduction system that modulates chemotaxis in response to various stimuli. Catalyzes the demethylation of specific methylglutamate residues introduced into the chemoreceptors (methyl-accepting chemotaxis proteins or MCP) by CheR. Also mediates the irreversible deamidation of specific glutamine residues to glutamic acid. The polypeptide is Protein-glutamate methylesterase/protein-glutamine glutaminase 3 (Pseudomonas syringae pv. syringae (strain B728a)).